The sequence spans 103 residues: MIVTTTSTIQGKEIIEYIDIVNGEAIMGANIVRDLFASVRDVVGGRAGAYESKLKEARDIAMEEMKTFARQKNANAIVGIDVDYEVVREGMLMVAVSGTAVRI.

This sequence belongs to the UPF0145 family.

The sequence is that of UPF0145 protein BCE_5284 from Bacillus cereus (strain ATCC 10987 / NRS 248).